We begin with the raw amino-acid sequence, 104 residues long: Large ribosomal subunit protein bL21 (104 aa).

The protein belongs to the bacterial ribosomal protein bL21 family. In terms of assembly, part of the 50S ribosomal subunit. Contacts protein L20.

Functionally, this protein binds to 23S rRNA in the presence of protein L20. The chain is Large ribosomal subunit protein bL21 from Thermodesulfovibrio yellowstonii (strain ATCC 51303 / DSM 11347 / YP87).